The following is a 246-amino-acid chain: Putative pectinesterase 57 (246 aa).

Asparagine 127 and asparagine 143 each carry an N-linked (GlcNAc...) asparagine glycan. Threonine 152 contacts substrate. An N-linked (GlcNAc...) asparagine glycan is attached at asparagine 174. The active-site Proton donor is the aspartate 205. Aspartate 226 acts as the Nucleophile in catalysis.

The protein belongs to the pectinesterase family.

The enzyme catalyses [(1-&gt;4)-alpha-D-galacturonosyl methyl ester](n) + n H2O = [(1-&gt;4)-alpha-D-galacturonosyl](n) + n methanol + n H(+). It participates in glycan metabolism; pectin degradation; 2-dehydro-3-deoxy-D-gluconate from pectin: step 1/5. Functionally, acts in the modification of cell walls via demethylesterification of cell wall pectin. The polypeptide is Putative pectinesterase 57 (PME57) (Arabidopsis thaliana (Mouse-ear cress)).